Reading from the N-terminus, the 342-residue chain is Protein-glutamate methylesterase/protein-glutamine glutaminase 1 (342 aa).

Positions 3 to 121 constitute a Response regulatory domain; that stretch reads RVLVIDDSLF…NIREIGGELK (119 aa). A 4-aspartylphosphate modification is found at D54. One can recognise a CheB-type methylesterase domain in the interval 141-340; that stretch reads DSNARNVVLI…EKIVETIRAM (200 aa). Residues S153, H180, and D282 contribute to the active site.

The protein belongs to the CheB family. Phosphorylated by CheA. Phosphorylation of the N-terminal regulatory domain activates the methylesterase activity.

The protein resides in the cytoplasm. The catalysed reaction is [protein]-L-glutamate 5-O-methyl ester + H2O = L-glutamyl-[protein] + methanol + H(+). The enzyme catalyses L-glutaminyl-[protein] + H2O = L-glutamyl-[protein] + NH4(+). Functionally, involved in chemotaxis. Part of a chemotaxis signal transduction system that modulates chemotaxis in response to various stimuli. Catalyzes the demethylation of specific methylglutamate residues introduced into the chemoreceptors (methyl-accepting chemotaxis proteins or MCP) by CheR. Also mediates the irreversible deamidation of specific glutamine residues to glutamic acid. The protein is Protein-glutamate methylesterase/protein-glutamine glutaminase 1 of Methanospirillum hungatei JF-1 (strain ATCC 27890 / DSM 864 / NBRC 100397 / JF-1).